A 428-amino-acid polypeptide reads, in one-letter code: Adenylosuccinate synthetase (428 aa).

GTP contacts are provided by residues 12-18 (GDEGKGK) and 40-42 (GHT). D13 serves as the catalytic Proton acceptor. 2 residues coordinate Mg(2+): D13 and G40. Residues 13–16 (DEGK), 38–41 (NAGH), T128, R142, Q223, T238, and R302 contribute to the IMP site. Residue H41 is the Proton donor of the active site. Position 298–304 (298–304 (VTTGRPR)) interacts with substrate. GTP-binding positions include R304, 330 to 332 (KLD), and 413 to 415 (GVG).

Belongs to the adenylosuccinate synthetase family. In terms of assembly, homodimer. The cofactor is Mg(2+).

It is found in the cytoplasm. The enzyme catalyses IMP + L-aspartate + GTP = N(6)-(1,2-dicarboxyethyl)-AMP + GDP + phosphate + 2 H(+). It participates in purine metabolism; AMP biosynthesis via de novo pathway; AMP from IMP: step 1/2. Functionally, plays an important role in the de novo pathway of purine nucleotide biosynthesis. Catalyzes the first committed step in the biosynthesis of AMP from IMP. This Acidothermus cellulolyticus (strain ATCC 43068 / DSM 8971 / 11B) protein is Adenylosuccinate synthetase.